A 149-amino-acid chain; its full sequence is MLKAAAAALYRKNSNFLQGLRLLHKMSDQDLAKIPLVDIDEEGIFKYILIRVTGKETADGTEPSKLVVRGYADCEWHADIYERTQGTIKGTGLDTECLGGGRIEHNPEKKYLKVYGHSTGYGKADHAESKRVLLTKYKNYEIETSDEGY.

Lys46 lines the substrate pocket. The Proton acceptor role is filled by His77. 118–120 (STG) contacts substrate.

It belongs to the janus family.

In terms of biological role, janA and janB regulate somatic sex differentiation. The protein is Sex-regulated protein janus-A (janA) of Drosophila pseudoobscura pseudoobscura (Fruit fly).